Consider the following 223-residue polypeptide: Nitrate reductase gamma chain (223 aa).

The helical transmembrane segment at 2–27 (SGQILWGIMPYIVLTIFIGGHIYRYQ) threads the bilayer. Residues 28 to 45 (HDQFGWTAKSSELLEKKK) lie on the Cytoplasmic side of the membrane. A helical membrane pass occupies residues 46–68 (LAAGSTLFHWGLLCVVGGHVMGI). Heme b is bound by residues His-54 and His-64. Residues 69–81 (LIPEGVYASLGIS) lie on the Extracellular side of the membrane. The helical transmembrane segment at 82-111 (EHMYHKMAIGAGLPAGIAACTGLVILTYRR) threads the bilayer. Residues 112–123 (LFDKRIRKTSSP) are Cytoplasmic-facing. Residues 124 to 147 (SDILTLLLLLFMMLSGVAATFLNI) traverse the membrane as a helical segment. Over 148 to 180 (DSKGFDYRTTVGPWFREIVLFRPDASLMESVPL) the chain is Extracellular. Residues 181-196 (WFKFHIVIGYVVFILW) traverse the membrane as a helical segment. The heme b site is built by His-185 and His-203. Topologically, residues 197–223 (PFTRLVHVFSLPLKYLTRSYVVYRKRS) are cytoplasmic.

Requires heme as cofactor.

The protein localises to the cell membrane. The enzyme catalyses nitrate + a quinol = a quinone + nitrite + H2O. In terms of biological role, the gamma chain is a membrane-embedded heme-iron unit resembling cytochrome b, which transfers electrons from quinones to the beta subunit. The chain is Nitrate reductase gamma chain (narI) from Bacillus subtilis (strain 168).